The following is an 857-amino-acid chain: Bifunctional levopimaradiene synthase, chloroplastic (857 aa).

Residues 1 to 33 constitute a chloroplast transit peptide; the sequence is MALPSSSLSSQIHTGATTQCIPHFHGSLNAGTS. Position 257 (K257) interacts with substrate. The Mg(2+) site is built by D390 and D392. Positions 390-393 match the DXDD motif motif; the sequence is DIDD. Residue K477 participates in substrate binding. 5 residues coordinate Mg(2+): D609, D613, N753, T757, and E761. Residues 609–613 carry the DDXXD motif motif; it reads DDLYD.

It belongs to the terpene synthase family. Tpsd subfamily. The cofactor is Mg(2+).

It is found in the plastid. The protein resides in the chloroplast. The enzyme catalyses (2E,6E,10E)-geranylgeranyl diphosphate = (+)-copalyl diphosphate. The catalysed reaction is (+)-copalyl diphosphate = abieta-7,13-diene + diphosphate. It catalyses the reaction (+)-copalyl diphosphate = abieta-8(14),12-diene + diphosphate. It carries out the reaction (+)-copalyl diphosphate = neoabietadiene + diphosphate. Its pathway is terpene metabolism; oleoresin biosynthesis. Its function is as follows. Involved in defensive oleoresin formation in conifers in response to insect attack or other injury. Involved in diterpene (C20) olefins biosynthesis. Bifunctional enzyme that catalyzes two sequential cyclizations of geranylgeranyl diphosphate (GGPP) to levopimaradiene. Levopimaradiene is the major products of the enzyme with abietadiene and neoabietadiene. No activity with farnesyl diphosphate (FPP) as substrate. In Pinus contorta (Shore pine), this protein is Bifunctional levopimaradiene synthase, chloroplastic.